A 303-amino-acid polypeptide reads, in one-letter code: Golgi to ER traffic protein 2 (303 aa).

Residues 1–168 (MSEQPLSQDE…NAYNIYQQRL (168 aa)) are Cytoplasmic-facing. The segment at 19–86 (RQAKMARGKA…DPEDDPDLMD (68 aa)) is disordered. Residues 31–48 (RLNNILSQGSSVKGTTDP) show a composition bias toward polar residues. Residues 169–189 (WKFRFSIIRFAAVLTNFFYHY) traverse the membrane as a helical segment. Residues 190 to 216 (LTIQDYSFTSSPHFYVRALAPHPAVNS) lie on the Lumenal side of the membrane. A helical membrane pass occupies residues 217–236 (FITWFSTCEVAILASFYLIT). The Cytoplasmic segment spans residues 237-280 (SKNNIYANASDGNLLLKGISMGAMVLPQLRAYQPLVIRLAHYWE). A helical membrane pass occupies residues 281–301 (VFSMLLGDIFLVVVLFGLVSI). Over 302–303 (YN) the chain is Lumenal.

This sequence belongs to the GET2 family. Component of the Golgi to ER traffic (GET) complex, which is composed of GET1, GET2 and GET3. Within the complex, GET1 and GET2 form a heterotetramer which is stabilized by phosphatidylinositol binding and which binds to the GET3 homodimer.

It localises to the endoplasmic reticulum membrane. The protein resides in the golgi apparatus membrane. Functionally, required for the post-translational delivery of tail-anchored (TA) proteins to the endoplasmic reticulum. Together with GET1, acts as a membrane receptor for soluble GET3, which recognizes and selectively binds the transmembrane domain of TA proteins in the cytosol. The GET complex cooperates with the HDEL receptor ERD2 to mediate the ATP-dependent retrieval of resident ER proteins that contain a C-terminal H-D-E-L retention signal from the Golgi to the ER. The chain is Golgi to ER traffic protein 2 from Debaryomyces hansenii (strain ATCC 36239 / CBS 767 / BCRC 21394 / JCM 1990 / NBRC 0083 / IGC 2968) (Yeast).